The sequence spans 274 residues: Thiamine kinase (274 aa).

This sequence belongs to the thiamine kinase family.

It catalyses the reaction thiamine + ATP = thiamine phosphate + ADP + H(+). It functions in the pathway cofactor biosynthesis; thiamine diphosphate biosynthesis; thiamine phosphate from thiamine: step 1/1. Functionally, catalyzes the ATP-dependent phosphorylation of thiamine to thiamine phosphate. Is involved in thiamine salvage. The sequence is that of Thiamine kinase from Salmonella typhi.